Consider the following 378-residue polypeptide: Nucleosome assembly protein 1;1 (378 aa).

Positions 33 to 87 (VNALKDKLQSLAGQHTDVLEALSPNVRKRVEYLREIQGQHDEIELKFFEERAALE) form a coiled coil. The Nuclear export signal motif lies at 54–69 (LSPNVRKRVEYLREIQ). The Nuclear localization signal motif lies at 230–235 (KKKPKK). The interval 306–378 (AVQAEDFDDM…ADQPADCKQQ (73 aa)) is disordered. The span at 308 to 344 (QAEDFDDMEDDEEDDEDDDEDEEEEEEDEDEDEDDEE) shows a compositional bias: acidic residues. Residues 348-352 (KPKKK) carry the Nuclear localization signal motif. Residues 356–378 (KPKLPSKGGAQGGADQPADCKQQ) are compositionally biased toward low complexity. Cys375 carries the cysteine methyl ester modification. Cys375 is lipidated: S-farnesyl cysteine. Positions 376–378 (KQQ) are cleaved as a propeptide — removed in mature form.

It belongs to the nucleosome assembly protein (NAP) family.

It localises to the nucleus. Its subcellular location is the cytoplasm. Its function is as follows. May modulate chromatin structure by regulation of nucleosome assembly/disassembly. The protein is Nucleosome assembly protein 1;1 (NAP1;1) of Oryza sativa subsp. japonica (Rice).